A 105-amino-acid polypeptide reads, in one-letter code: Met repressor (105 aa).

This sequence belongs to the MetJ family. As to quaternary structure, homodimer.

Its subcellular location is the cytoplasm. In terms of biological role, this regulatory protein, when combined with SAM (S-adenosylmethionine) represses the expression of the methionine regulon and of enzymes involved in SAM synthesis. The polypeptide is Met repressor (Shigella boydii serotype 18 (strain CDC 3083-94 / BS512)).